The chain runs to 109 residues: Fluoride-specific ion channel FluC 1 (109 aa).

The next 3 membrane-spanning stretches (helical) occupy residues 21–41, 52–72, and 84–104; these read LFIN…GFFI, IILS…YFLY, and IIFC…GFWI.

This sequence belongs to the fluoride channel Fluc/FEX (TC 1.A.43) family.

Its subcellular location is the cell inner membrane. The enzyme catalyses fluoride(in) = fluoride(out). Its function is as follows. Fluoride-specific ion channel. Important for reducing fluoride concentration in the cell, thus reducing its toxicity. The sequence is that of Fluoride-specific ion channel FluC 1 from Prochlorococcus marinus (strain MIT 9312).